Here is a 386-residue protein sequence, read N- to C-terminus: Microtubule-binding protein TANGLED1 (386 aa).

Disordered stretches follow at residues 83–105, 140–202, 244–266, 303–330, and 345–386; these read RMRG…GVGG, AAGA…RVRS, HAST…QKRL, PARP…CSFS, and RLSL…ISSR. Positions 170 to 180 are enriched in basic residues; the sequence is RARRAREKQSH. A compositionally biased stretch (low complexity) spans 181–193; it reads RGGAATRGADAAT. A compositionally biased stretch (polar residues) spans 375 to 386; the sequence is TVRTVSSKISSR.

As to expression, expressed in vegetative shoot tips consisting of leaf primordia and the bases of immature leaves, the shoot apical meristem, and unexpanded stem tissue. Strongly expressed in tissues enriched in dividing cells: ear primordia and embryos.

It is found in the cytoplasm. Its subcellular location is the cytoskeleton. It localises to the spindle. The protein resides in the phragmoplast. In terms of biological role, is required for spatial control cell division during leaf development. Through an association with microtubules, acts both for the positioning of cytoskeletal arrays that establish planes of cell division during prophase and for spatial guidance of expanding phragmoplasts toward preestablished cortical division sites (CDS) during cytokinesis. The chain is Microtubule-binding protein TANGLED1 (TAN1) from Zea mays (Maize).